The primary structure comprises 426 residues: MKTLGFSPKQKFCARRQTQRWLPEGDRSSSFTPSTMETQRKKFTKVSVNSELLPVDLIMEILKKLSLKPLIRFLCVSKLWASIIRDPYFMKLFLNESLKRPKSLVFVFRAQSLGSIFSSVHLKSTREISSSSSSSSASSITYHVTCYTQQRMTISPSVHGLICYGPPSSLVIYNPCTRRSITLPKIKAGRRAINQYIGYDPLDGNYKVVCITRGMPMLRNRRGLAEEIQVLTLGTRDSSWRMIHDIIPPHSPVSEELCINGVLYYRAFIGTKLNESAIMSFDVRSEKFDLIKVPCNFRSFSKLAKYEGKLAVIFYEKKTSGIIGLWILEDASNGEWSKKTFALPNLAASSTNSRILKLQKFRTTDADTCEIIFTPSYAHSSLSSAIYCDLKENKVRKFVKEGWTENYLPCNADSVSSTQVENLMFL.

The F-box domain maps to 47–92 (SVNSELLPVDLIMEILKKLSLKPLIRFLCVSKLWASIIRDPYFMKL).

The protein is Putative F-box protein At4g38870 of Arabidopsis thaliana (Mouse-ear cress).